The chain runs to 433 residues: Epi-neemfruitin B synthase L1AT (433 aa).

Active-site proton acceptor residues include histidine 151 and aspartate 372.

The protein belongs to the plant acyltransferase family. Monomer. As to expression, mainly expressed in petioles and, to a lower extent, in roots.

The enzyme catalyses (21S)-21-acetyl-1-hydroxy-apo-melianone + acetyl-CoA = epi-neemfruitin B + acetate + CoA + H(+). It participates in secondary metabolite biosynthesis; terpenoid biosynthesis. Functionally, acetyltransferase involved in the biosynthesis of limonoids triterpene natural products such as azadirachtin, an antifeedant widely used as bioinsecticide, and possessing many medicinal applications including anti-tumoral, anti-malarial, anti-rheumatic, antibacterial, anti-inflammatory, anti-pyretic and diuretic effects. Catalyzes the formation of epi-neemfruitin B from (21S)-21-acetyl-1-hydroxy-apo-melianone. This chain is Epi-neemfruitin B synthase L1AT, found in Melia azedarach (Chinaberry tree).